The following is a 132-amino-acid chain: Large ribosomal subunit protein uL14 (132 aa).

This sequence belongs to the universal ribosomal protein uL14 family. The L3/L14/L24e cluster may contact the 16S rRNA in 2 intersubunit bridges. Part of the 50S ribosomal subunit. Forms a cluster with proteins L3 and L24e.

Its function is as follows. Forms part of two intersubunit bridges in the 70S ribosome. Binds to 23S rRNA. This chain is Large ribosomal subunit protein uL14, found in Haloarcula marismortui (strain ATCC 43049 / DSM 3752 / JCM 8966 / VKM B-1809) (Halobacterium marismortui).